Consider the following 273-residue polypeptide: Putative pyruvate, phosphate dikinase regulatory protein (273 aa).

149–156 (GPSRTSKT) serves as a coordination point for ADP.

This sequence belongs to the pyruvate, phosphate/water dikinase regulatory protein family. PDRP subfamily.

It catalyses the reaction N(tele)-phospho-L-histidyl/L-threonyl-[pyruvate, phosphate dikinase] + ADP = N(tele)-phospho-L-histidyl/O-phospho-L-threonyl-[pyruvate, phosphate dikinase] + AMP + H(+). It carries out the reaction N(tele)-phospho-L-histidyl/O-phospho-L-threonyl-[pyruvate, phosphate dikinase] + phosphate + H(+) = N(tele)-phospho-L-histidyl/L-threonyl-[pyruvate, phosphate dikinase] + diphosphate. Functionally, bifunctional serine/threonine kinase and phosphorylase involved in the regulation of the pyruvate, phosphate dikinase (PPDK) by catalyzing its phosphorylation/dephosphorylation. This Rickettsia prowazekii (strain Madrid E) protein is Putative pyruvate, phosphate dikinase regulatory protein.